The following is a 511-amino-acid chain: Aprataxin and PNK-like factor (511 aa).

Residues 1–108 (MSGGFELQPR…RILSIPSEVE (108 aa)) form the FHA-like domain. The residue at position 116 (serine 116) is a Phosphoserine; by ATM. Serine 149 is modified (phosphoserine). Residues 182–191 (RKRILPTWML) carry the KBM motif. The segment at 223 to 370 (KSQLNTTQQG…ATDSVLQGSE (148 aa)) is disordered. Composition is skewed to polar residues over residues 225-249 (QLNT…SAEQ) and 263-293 (STIS…NAQR). Residues 304–315 (VSKHKIATKRTP) are compositionally biased toward basic residues. Over residues 324 to 344 (CSENCSSAQGDSLQDESQGSH) the composition is skewed to polar residues. A compositionally biased stretch (low complexity) spans 345–355 (SESSSNPSNPE). Positions 376, 381, 386, and 387 each coordinate a glycoprotein. The PBZ-type 1 zinc finger occupies 377–398 (TSCMYGANCYRKNPVHFQHFSH). The tract at residues 406-416 (GVQIVGQDETD) is flexible linker. Residues 419-440 (PECPYGPSCYRKNPQHKIEYRH) form a PBZ-type 2 zinc finger. Residues tyrosine 423, tyrosine 428, and arginine 429 each coordinate a glycoprotein. The interval 449 to 497 (LDEDNDNVGQPNEYDLNDSFLDDEEEDYEPTDEDSDWEPGKEDEEKEDV) is disordered. Acidic residues predominate over residues 468 to 497 (FLDDEEEDYEPTDEDSDWEPGKEDEEKEDV). An NAP1L motif motif is present at residues 476-500 (YEPTDEDSDWEPGKEDEEKEDVEEL). The stretch at 487–511 (PGKEDEEKEDVEELLKEAKRFMKRK) forms a coiled coil.

It belongs to the APLF family. In terms of assembly, interacts with LIG4. Interacts with PARP1. Interacts with XRCC4. Interacts (via KBM motif) with XRCC5 and XRCC6; promoting recruitment to DNA damage sites. Interacts with XRCC1. Interacts (via C-terminal disordered region) with histones; interacts with histone H2A, H2B and H3-H4. Poly-ADP-ribosylated. In addition to binding non covalently poly-ADP-ribose via its PBZ-type zinc fingers, the protein is also covalently poly-ADP-ribosylated by PARP1. Post-translationally, phosphorylated in an ATM-dependent manner upon double-strand DNA break.

The protein localises to the nucleus. Its subcellular location is the chromosome. It localises to the cytoplasm. The protein resides in the cytosol. Its function is as follows. Histone chaperone involved in single-strand and double-strand DNA break repair. Recruited to sites of DNA damage through interaction with branched poly-ADP-ribose chains, a polymeric post-translational modification synthesized transiently at sites of chromosomal damage to accelerate DNA strand break repair reactions. Following recruitment to DNA damage sites, acts as a histone chaperone that mediates histone eviction during DNA repair and promotes recruitment of histone variant MACROH2A1. Also has a nuclease activity: displays apurinic-apyrimidinic (AP) endonuclease and 3'-5' exonuclease activities in vitro. Also able to introduce nicks at hydroxyuracil and other types of pyrimidine base damage. Together with PARP3, promotes the retention of the LIG4-XRCC4 complex on chromatin and accelerate DNA ligation during non-homologous end-joining (NHEJ). Also acts as a negative regulator of cell pluripotency by promoting histone exchange. Required for the embryo implantation during the epithelial to mesenchymal transition in females. This is Aprataxin and PNK-like factor from Homo sapiens (Human).